An 85-amino-acid chain; its full sequence is Cell division topological specificity factor (85 aa).

This sequence belongs to the MinE family.

Functionally, prevents the cell division inhibition by proteins MinC and MinD at internal division sites while permitting inhibition at polar sites. This ensures cell division at the proper site by restricting the formation of a division septum at the midpoint of the long axis of the cell. This chain is Cell division topological specificity factor, found in Xylella fastidiosa (strain M23).